Reading from the N-terminus, the 215-residue chain is Orotate phosphoribosyltransferase (215 aa).

K26 contributes to the 5-phospho-alpha-D-ribose 1-diphosphate binding site. 34 to 35 serves as a coordination point for orotate; sequence FF. 5-phospho-alpha-D-ribose 1-diphosphate contacts are provided by residues 72-73, R99, K100, K103, H105, and 124-132; these read YK and DDVITAGTA. Orotate contacts are provided by T128 and R156.

It belongs to the purine/pyrimidine phosphoribosyltransferase family. PyrE subfamily. As to quaternary structure, homodimer. Requires Mg(2+) as cofactor.

It carries out the reaction orotidine 5'-phosphate + diphosphate = orotate + 5-phospho-alpha-D-ribose 1-diphosphate. It participates in pyrimidine metabolism; UMP biosynthesis via de novo pathway; UMP from orotate: step 1/2. In terms of biological role, catalyzes the transfer of a ribosyl phosphate group from 5-phosphoribose 1-diphosphate to orotate, leading to the formation of orotidine monophosphate (OMP). This Yersinia pseudotuberculosis serotype O:1b (strain IP 31758) protein is Orotate phosphoribosyltransferase.